We begin with the raw amino-acid sequence, 82 residues long: U-actitoxin-Avd3f (82 aa).

The signal sequence occupies residues 1-16 (MVFLLCFFLVADVSYG). One can recognise a BPTI/Kunitz inhibitor domain in the interval 21–71 (CLLPMDVGRCRASHPRYYYNSSSKRCEKFIYGGCRGNANNFHTLEECEKVC). 3 disulfides stabilise this stretch: Cys21-Cys71, Cys30-Cys54, and Cys46-Cys67. The propeptide occupies 75-82 (SRDSPKEN).

Belongs to the venom Kunitz-type family. Sea anemone type 2 potassium channel toxin subfamily.

The protein localises to the secreted. Its subcellular location is the nematocyst. Its function is as follows. Dual-function toxin that inhibits both the serine protease trypsin (Kd=30 nM) and voltage-gated potassium channels Kv1.2/KCNA2 (IC(50)=2800 nM). The polypeptide is U-actitoxin-Avd3f (Anemonia viridis (Snakelocks anemone)).